A 432-amino-acid polypeptide reads, in one-letter code: D-amino acid dehydrogenase (432 aa).

Position 3-17 (3-17 (VVILGSGVVGVASAW)) interacts with FAD.

The protein belongs to the DadA oxidoreductase family. It depends on FAD as a cofactor.

It carries out the reaction a D-alpha-amino acid + A + H2O = a 2-oxocarboxylate + AH2 + NH4(+). Its pathway is amino-acid degradation; D-alanine degradation; NH(3) and pyruvate from D-alanine: step 1/1. Oxidative deamination of D-amino acids. This chain is D-amino acid dehydrogenase, found in Shigella dysenteriae serotype 1 (strain Sd197).